Consider the following 548-residue polypeptide: Chaperonin GroEL (548 aa).

Residues 30–33, Lys51, 87–91, Gly415, and Asp496 each bind ATP; these read TLGP and DGTTT.

The protein belongs to the chaperonin (HSP60) family. As to quaternary structure, forms a cylinder of 14 subunits composed of two heptameric rings stacked back-to-back. Interacts with the co-chaperonin GroES.

It is found in the cytoplasm. It catalyses the reaction ATP + H2O + a folded polypeptide = ADP + phosphate + an unfolded polypeptide.. Together with its co-chaperonin GroES, plays an essential role in assisting protein folding. The GroEL-GroES system forms a nano-cage that allows encapsulation of the non-native substrate proteins and provides a physical environment optimized to promote and accelerate protein folding. This Haemophilus influenzae (strain ATCC 51907 / DSM 11121 / KW20 / Rd) protein is Chaperonin GroEL.